Reading from the N-terminus, the 74-residue chain is DNA-directed RNA polymerase subunit omega (74 aa).

Belongs to the RNA polymerase subunit omega family. The RNAP catalytic core consists of 2 alpha, 1 beta, 1 beta' and 1 omega subunit. When a sigma factor is associated with the core the holoenzyme is formed, which can initiate transcription.

It catalyses the reaction RNA(n) + a ribonucleoside 5'-triphosphate = RNA(n+1) + diphosphate. Promotes RNA polymerase assembly. Latches the N- and C-terminal regions of the beta' subunit thereby facilitating its interaction with the beta and alpha subunits. This Helicobacter acinonychis (strain Sheeba) protein is DNA-directed RNA polymerase subunit omega.